A 148-amino-acid chain; its full sequence is Flavodoxin (148 aa).

The 142-residue stretch at 4-145 folds into the Flavodoxin-like domain; sequence VLIVYGSTTG…DVSAWAGRVV (142 aa).

It belongs to the flavodoxin family. FMN is required as a cofactor.

Its function is as follows. Low-potential electron donor to a number of redox enzymes. This is Flavodoxin from Nitratidesulfovibrio vulgaris (strain DSM 19637 / Miyazaki F) (Desulfovibrio vulgaris).